A 319-amino-acid polypeptide reads, in one-letter code: MNPYETEIYKVVPIPNKGMGMIAKVKIPVGTRIFAETPLIRTKSDAKEIEEALSTKTKEEQEAFHRLFNAHPDTMGPFLGPFYSNALTIDETKGGMFLLGSRMNHDCSPNVKHTWNPRLDQVTVHAVRDIEAGEEILTTYIDLHKSHTERQKILLEHFGFKCYCSVCSVEERKIRKISDLRRKQLAYYDRTMAKMCIVNPRGALRALRHRIHIAHEELLFGRLDIIALLDAFRLCVIHGDFERASIFAKKGTKAISLYEGTDSEKYLKISKYVENPRSHALAEGVPALPLFLEEDDELSDLEDNLWGCKLEEDVYSDTD.

In terms of domain architecture, SET spans 4 to 141 (YETEIYKVVP…AGEEILTTYI (138 aa)). A Phosphoserine modification is found at S316. T318 carries the phosphothreonine modification.

It belongs to the class V-like SAM-binding methyltransferase superfamily.

It is found in the nucleus. Its subcellular location is the chromosome. The protein localises to the cytoplasm. It carries out the reaction L-lysyl-[histone] + S-adenosyl-L-methionine = N(6)-methyl-L-lysyl-[histone] + S-adenosyl-L-homocysteine + H(+). In terms of biological role, histone methyltransferase that monomethylates 'Lys-5', 'Lys-8' and 'Lys-12' of histone H4 (H4K5me1, H4K8me1 and H4K12me1, respectively), thereby controlling gene expression and remodeling chromatin structures. Monomethylation of 'Lys-5' of histone H4 (H4K5me1) is required for subsequent acetylation and formation of N6-acetyl-N6-methyllysine (H4K5acme). This Schizosaccharomyces pombe (strain 972 / ATCC 24843) (Fission yeast) protein is Histone-lysine N-methyltransferase set5 (set5).